The following is a 460-amino-acid chain: Chromosomal replication initiator protein DnaA (460 aa).

The tract at residues 1 to 91 (MNLTSPKVST…SLWQSEDKSI (91 aa)) is domain I, interacts with DnaA modulators. The segment at 91–122 (IRSIDIQVIEERNSNFNVILKNREESNHNLGS) is domain II. The tract at residues 123–342 (PLDPRFTFDN…GALNKVTHTS (220 aa)) is domain III, AAA+ region. Glycine 169, glycine 171, lysine 172, and threonine 173 together coordinate ATP. A domain IV, binds dsDNA region spans residues 343-460 (LIGRSMTVES…EINRLKKMFK (118 aa)).

It belongs to the DnaA family. In terms of assembly, oligomerizes as a right-handed, spiral filament on DNA at oriC.

The protein localises to the cytoplasm. Its function is as follows. Plays an essential role in the initiation and regulation of chromosomal replication. ATP-DnaA binds to the origin of replication (oriC) to initiate formation of the DNA replication initiation complex once per cell cycle. Binds the DnaA box (a 9 base pair repeat at the origin) and separates the double-stranded (ds)DNA. Forms a right-handed helical filament on oriC DNA; dsDNA binds to the exterior of the filament while single-stranded (ss)DNA is stabiized in the filament's interior. The ATP-DnaA-oriC complex binds and stabilizes one strand of the AT-rich DNA unwinding element (DUE), permitting loading of DNA polymerase. After initiation quickly degrades to an ADP-DnaA complex that is not apt for DNA replication. Binds acidic phospholipids. This is Chromosomal replication initiator protein DnaA from Wolbachia pipientis wMel.